The chain runs to 445 residues: Guanosine nucleotide diphosphate dissociation inhibitor 1 (445 aa).

It belongs to the Rab GDI family. As to quaternary structure, interacts with the GDP-bound form of RABA5C (via C-terminus). As to expression, expressed in roots, rosette leaves, stems, floral buds and siliques.

Its function is as follows. Regulates the GDP/GTP exchange reaction of most RAB proteins by inhibiting the dissociation of GDP from them, and the subsequent binding of GTP. The polypeptide is Guanosine nucleotide diphosphate dissociation inhibitor 1 (GDI1) (Arabidopsis thaliana (Mouse-ear cress)).